Here is a 190-residue protein sequence, read N- to C-terminus: Potassium-transporting ATPase KdpC subunit (190 aa).

The chain crosses the membrane as a helical span at residues 10–30 (TFLFLLLITGGVYPLLTTALG).

This sequence belongs to the KdpC family. The system is composed of three essential subunits: KdpA, KdpB and KdpC.

It localises to the cell inner membrane. In terms of biological role, part of the high-affinity ATP-driven potassium transport (or Kdp) system, which catalyzes the hydrolysis of ATP coupled with the electrogenic transport of potassium into the cytoplasm. This subunit acts as a catalytic chaperone that increases the ATP-binding affinity of the ATP-hydrolyzing subunit KdpB by the formation of a transient KdpB/KdpC/ATP ternary complex. This chain is Potassium-transporting ATPase KdpC subunit, found in Escherichia fergusonii (strain ATCC 35469 / DSM 13698 / CCUG 18766 / IAM 14443 / JCM 21226 / LMG 7866 / NBRC 102419 / NCTC 12128 / CDC 0568-73).